A 258-amino-acid chain; its full sequence is Hydroxyacylglutathione hydrolase (258 aa).

Zn(2+) contacts are provided by His-55, His-57, Asp-59, His-60, His-115, Asp-132, and His-170.

The protein belongs to the metallo-beta-lactamase superfamily. Glyoxalase II family. As to quaternary structure, monomer. Zn(2+) serves as cofactor.

It catalyses the reaction an S-(2-hydroxyacyl)glutathione + H2O = a 2-hydroxy carboxylate + glutathione + H(+). It functions in the pathway secondary metabolite metabolism; methylglyoxal degradation; (R)-lactate from methylglyoxal: step 2/2. Its function is as follows. Thiolesterase that catalyzes the hydrolysis of S-D-lactoyl-glutathione to form glutathione and D-lactic acid. The sequence is that of Hydroxyacylglutathione hydrolase from Shewanella denitrificans (strain OS217 / ATCC BAA-1090 / DSM 15013).